The following is a 340-amino-acid chain: MPSIRLADLAQQLDAQVHGDGDLVITGIASMHSAQPEQITFLSNSRYREQLASCNAGAVVLTEADLPFCKVAALVVENPYFTYARMAQIMDTTPQPAQDIAPSAVISPQATLGEGVSVGANAVIESGVVLGDNVVIGAGCFIGKNTHIGAGSRLWANVSIYHEVVIGQNCLIQSGTVIGADGFGYANDRGNWVKIPQLGSVHIGDRVEIGACTTIDRGALDNTIIGNGVIIDNQCQIAHNVVIGDNTAVAGGVIMAGSLKVGRYCMIGGASVINGHMEICDKVTITGMGMVMRPITEPGLYSSGIPLQPNKMWRKTAALVMNIDGINKRLKAVERKIDKE.

Residue His239 is the Proton acceptor of the active site.

This sequence belongs to the transferase hexapeptide repeat family. LpxD subfamily. In terms of assembly, homotrimer.

The catalysed reaction is a UDP-3-O-[(3R)-3-hydroxyacyl]-alpha-D-glucosamine + a (3R)-hydroxyacyl-[ACP] = a UDP-2-N,3-O-bis[(3R)-3-hydroxyacyl]-alpha-D-glucosamine + holo-[ACP] + H(+). The enzyme catalyses UDP-3-O-[(3R)-3-hydroxytetradecanoyl]-alpha-D-glucosamine + (3R)-hydroxytetradecanoyl-[ACP] = UDP-2-N,3-O-bis[(3R)-3-hydroxytetradecanoyl]-alpha-D-glucosamine + holo-[ACP] + H(+). Its pathway is glycolipid biosynthesis; lipid IV(A) biosynthesis; lipid IV(A) from (3R)-3-hydroxytetradecanoyl-[acyl-carrier-protein] and UDP-N-acetyl-alpha-D-glucosamine: step 3/6. Functionally, catalyzes the N-acylation of UDP-3-O-(hydroxytetradecanoyl)glucosamine using 3-hydroxytetradecanoyl-ACP as the acyl donor. Is involved in the biosynthesis of lipid A, a phosphorylated glycolipid that anchors the lipopolysaccharide to the outer membrane of the cell. The polypeptide is UDP-3-O-(3-hydroxymyristoyl)glucosamine N-acyltransferase (Yersinia pestis bv. Antiqua (strain Antiqua)).